Reading from the N-terminus, the 234-residue chain is BTB/POZ domain-containing protein KCTD5 (234 aa).

Alanine 2 is subject to N-acetylalanine. Positions 44 to 146 (KWVRLNVGGT…LVKDKIRERD (103 aa)) constitute a BTB domain. Positions 213–234 (PYGTTSEPSEKAKILQERGSRM) are disordered. The span at 220-234 (PSEKAKILQERGSRM) shows a compositional bias: basic and acidic residues.

Homopentamer. Interacts (via C-terminus) with GRASP55/GORASP2. Interacts with CUL3 and with ubiquitinated proteins. Interacts with CRY1.

The protein resides in the cytoplasm. It localises to the cytosol. The protein localises to the nucleus. Its interaction with CUL3 suggests that it may act as a substrate adapter in some E3 ligase complex. Does not affect the function of Kv channel Kv2.1/KCNB1, Kv1.2/KCNA2, Kv4.2/KCND2 and Kv3.4/KCNC4. In Mus musculus (Mouse), this protein is BTB/POZ domain-containing protein KCTD5 (Kctd5).